The chain runs to 291 residues: Taste receptor type 2 member 16 (291 aa).

Position 1 (M1) is a topological domain, extracellular. A helical membrane pass occupies residues 2-22 (IPIQLTVFFMIIYVLESLTII). Residues 23–41 (VQSSLIVAVLGREWLQVRR) are Cytoplasmic-facing. Residues 42 to 62 (LMPVDMILISLGISRFCLQWA) traverse the membrane as a helical segment. Residues 63 to 84 (SMLNNFCSYFNLNYVLCNLTIT) lie on the Extracellular side of the membrane. A glycan (N-linked (GlcNAc...) asparagine) is linked at N80. Residues 85-105 (WEFFNILTFWLNSLLTVFYCI) traverse the membrane as a helical segment. Residues 106–125 (KVSSFTHHIFLWLRWRILRL) are Cytoplasmic-facing. The helical transmembrane segment at 126–146 (FPWILLGSLMITCVTIIPSAI) threads the bilayer. Topologically, residues 147-182 (GNYIQIQLLTMEHLPRNSTVTDKLENFHQYQFQAHT) are extracellular. Residue N163 is glycosylated (N-linked (GlcNAc...) asparagine). A helical transmembrane segment spans residues 183–203 (VALVIPFILFLASTIFLMASL). The Cytoplasmic portion of the chain corresponds to 204–228 (TKQIQHHSTGHCNPSMKARFTALRS). A helical membrane pass occupies residues 229 to 249 (LAVLFIVFTSYFLTILITIIG). Residues 250-257 (TLFDKRCW) are Extracellular-facing. The helical transmembrane segment at 258-278 (LWVWEAFVYAFILMHSTSLML) threads the bilayer. Residues 279–291 (SSPTLKRILKGKC) are Cytoplasmic-facing.

Belongs to the G-protein coupled receptor T2R family. Interacts with RTP3 and RTP4. As to expression, expressed in a subset of gustducin-positive taste receptor cells of the tongue. Expressed in circumvallate papillae and testis.

It is found in the cell membrane. Gustducin-coupled receptor implicated in the perception of bitter compounds in the oral cavity and the gastrointestinal tract. Signals through PLCB2 and the calcium-regulated cation channel TRPM5. This chain is Taste receptor type 2 member 16 (TAS2R16), found in Homo sapiens (Human).